Here is a 162-residue protein sequence, read N- to C-terminus: Caveolin-2 (162 aa).

Residues Met-1–Lys-86 lie on the Cytoplasmic side of the membrane. Tyr-19 carries the post-translational modification Phosphotyrosine; by SRC. Phosphoserine occurs at positions 20 and 23. Tyr-27 is subject to Phosphotyrosine; by SRC. Ser-36 carries the phosphoserine modification. The helical intramembrane region spans Phe-87–Leu-107. Residues Ser-108–Asp-162 lie on the Cytoplasmic side of the membrane.

Belongs to the caveolin family. As to quaternary structure, monomer or homodimer. Interacts with CAV1; the interaction forms a stable heterooligomeric complex that is required for targeting to lipid rafts and for caveolae formation. Tyrosine phosphorylated forms do not form heterooligomers with the Tyr-19-phosphorylated form existing as a monomer or dimer, and the Tyr-27-form as a monomer only. Interacts (tyrosine phosphorylated form) with the SH2 domain-containing proteins, RASA1, NCK1 and SRC. Interacts (tyrosine phosphorylated form) with INSR, the interaction (Tyr-27-phosphorylated form) is increased on insulin stimulation. Interacts (Tyr-19 phosphorylated form) with MAPK1 (phosphorylated form); the interaction, promoted by insulin, leads to nuclear location and MAPK1 activation. Interacts with STAT3; the interaction is increased on insulin-induced tyrosine phosphorylation leading to STAT activation. Post-translationally, phosphorylated on serine and tyrosine residues. CAV1 promotes phosphorylation on Ser-23 which then targets the complex to the plasma membrane, lipid rafts and caveolae. Phosphorylation on Ser-36 appears to modulate mitosis in endothelial cells. Phosphorylation on both Tyr-19 and Tyr-27 is required for insulin-induced 'Ser-727' phosphorylation of STAT3 and its activation. Phosphorylation on Tyr-19 is required for insulin-induced phosphorylation of MAPK1 and DNA binding of STAT3. Tyrosine phosphorylation is induced by both EGF and insulin (By. similarity).

It localises to the nucleus. The protein resides in the cytoplasm. Its subcellular location is the golgi apparatus membrane. It is found in the cell membrane. The protein localises to the membrane. It localises to the caveola. Its function is as follows. May act as a scaffolding protein within caveolar membranes. Interacts directly with G-protein alpha subunits and can functionally regulate their activity. Acts as an accessory protein in conjunction with CAV1 in targeting to lipid rafts and driving caveolae formation. The Ser-36 phosphorylated form has a role in modulating mitosis in endothelial cells. Positive regulator of cellular mitogenesis of the MAPK signaling pathway. Required for the insulin-stimulated nuclear translocation and activation of MAPK1 and STAT3, and the subsequent regulation of cell cycle progression. The polypeptide is Caveolin-2 (CAV2) (Otolemur garnettii (Small-eared galago)).